The chain runs to 357 residues: 4-hydroxymandelate oxidase (357 aa).

The FMN hydroxy acid dehydrogenase domain maps to methionine 1 to valine 357. Glutamine 126 serves as a coordination point for FMN. Tyrosine 128 contacts a 2-oxocarboxylate. Threonine 154 serves as a coordination point for FMN. A 2-oxocarboxylate is bound at residue arginine 163. Lysine 228 is an FMN binding site. Histidine 252 acts as the Proton acceptor in catalysis. An a 2-oxocarboxylate-binding site is contributed by arginine 255. Residues aspartate 283–arginine 287 and glycine 306–arginine 307 each bind FMN.

It belongs to the FMN-dependent alpha-hydroxy acid dehydrogenase family. FMN is required as a cofactor.

It catalyses the reaction (S)-4-hydroxymandelate + O2 = 4-hydroxyphenylglyoxylate + H2O2. It functions in the pathway antibiotic biosynthesis; vancomycin biosynthesis. In terms of biological role, catalyzes the oxidation of p-hydroxymandelate to p-hydroxybenzoylformate in the biosynthesis of L-(4-hydroxyphenyl)glycine and L-(3,5-dihydroxyphenyl)glycine, 2 non-proteinogenic amino acids occurring in the vancomycin group of antibiotics. The chain is 4-hydroxymandelate oxidase (hmo) from Amycolatopsis orientalis (Nocardia orientalis).